Here is a 537-residue protein sequence, read N- to C-terminus: Small conductance calcium-activated potassium channel protein 1 (537 aa).

Polar residues predominate over residues methionine 1–valine 10. Residues methionine 1–leucine 90 are disordered. The segment covering glutamine 65–aspartate 76 has biased composition (acidic residues). Residues leucine 108 to valine 128 traverse the membrane as a helical segment. A helical membrane pass occupies residues phenylalanine 137–tyrosine 157. Residues isoleucine 176–histidine 196 form a helical membrane-spanning segment. A helical transmembrane segment spans residues valine 225–histidine 245. The helical transmembrane segment at leucine 274 to alanine 294 threads the bilayer. The segment at residues phenylalanine 314–valine 334 is an intramembrane region (pore-forming). The segment S6 stretch occupies residues valine 343–alanine 363. The calmodulin-binding stretch occupies residues aspartate 381–isoleucine 460.

The protein belongs to the potassium channel KCNN family. KCa2.1/KCNN1 subfamily. In terms of assembly, homodimer. Heteromultimer with KCNN2 and KCNN3. The complex is composed of 4 channel subunits each of which binds to a calmodulin subunit which regulates the channel activity through calcium-binding. Interacts with calmodulin. Highest expression in brain and liver with lower levels in heart, testis, kidney and colon. In colon, detected in smooth muscle cells. Expressed in atrial and ventricular myocytes with higher levels in atrial myocytes.

The protein resides in the membrane. Its subcellular location is the cytoplasm. It localises to the myofibril. The protein localises to the sarcomere. It is found in the z line. The catalysed reaction is K(+)(in) = K(+)(out). Its activity is regulated as follows. Inhibited by bee venom neurotoxin apamin. Inhibited by d-tubocurarine and tetraethylammonium (TEA). Small conductance calcium-activated potassium channel that mediates the voltage-independent transmembrane transfer of potassium across the cell membrane through a constitutive interaction with calmodulin which binds the intracellular calcium allowing its opening. The current is characterized by a voltage-independent activation, an intracellular calcium concentration increase-dependent activation and a single-channel conductance of about 3 picosiemens. Also presents an inwardly rectifying current, thus reducing its already small outward conductance of potassium ions, which is particularly the case when the membrane potential displays positive values, above + 20 mV. Activation is followed by membrane hyperpolarization. Thought to regulate neuronal excitability by contributing to the slow component of synaptic afterhyperpolarization. In Mus musculus (Mouse), this protein is Small conductance calcium-activated potassium channel protein 1.